The following is a 135-amino-acid chain: Retinol-binding protein 1 (135 aa).

Residues 22–32 (RALDVNVALRK) form an important for interaction with STRA6 region. Lys41, Met63, and Gln109 together coordinate all-trans-retinol.

Belongs to the calycin superfamily. Fatty-acid binding protein (FABP) family. As to quaternary structure, interacts (only as retinol-free apoprotein) with STRA6.

Its subcellular location is the cytoplasm. The protein localises to the lipid droplet. Its function is as follows. Cytoplasmic retinol-binding protein. Accepts retinol from the transport protein STRA6, and thereby contributes to retinol uptake, storage and retinoid homeostasis. The polypeptide is Retinol-binding protein 1 (RBP1) (Bos taurus (Bovine)).